Here is a 262-residue protein sequence, read N- to C-terminus: Zinc import ATP-binding protein ZnuC (262 aa).

An ABC transporter domain is found at L4–R220. G36–S43 serves as a coordination point for ATP. Residues A238–G262 are disordered.

This sequence belongs to the ABC transporter superfamily. Zinc importer (TC 3.A.1.15.5) family. In terms of assembly, the complex is composed of two ATP-binding proteins (ZnuC), two transmembrane proteins (ZnuB) and a solute-binding protein (ZnuA).

The protein resides in the cell inner membrane. The catalysed reaction is Zn(2+)(out) + ATP(in) + H2O(in) = Zn(2+)(in) + ADP(in) + phosphate(in) + H(+)(in). Its function is as follows. Part of the ABC transporter complex ZnuABC involved in zinc import. Responsible for energy coupling to the transport system. The chain is Zinc import ATP-binding protein ZnuC from Paramagnetospirillum magneticum (strain ATCC 700264 / AMB-1) (Magnetospirillum magneticum).